Consider the following 533-residue polypeptide: Probable lipid II flippase MurJ (533 aa).

The next 13 membrane-spanning stretches (helical) occupy residues 25–45 (ETLM…YAAF), 90–110 (VLFS…PLLV), 131–151 (LAAV…MSGM), 158–178 (FFAA…ALFY), 192–212 (YLSW…YIGV), 233–253 (LLLL…NLVI), 274–294 (IYQL…LPEL), 316–336 (FVLF…DDII), 350–370 (TTLV…FVLI), 389–409 (YTAI…PVLA), 412–432 (GIAL…FVTL), 449–469 (AMLL…SHRW), and 484–504 (GVLG…AFLI).

It belongs to the MurJ/MviN family.

It localises to the cell inner membrane. The protein operates within cell wall biogenesis; peptidoglycan biosynthesis. Its function is as follows. Involved in peptidoglycan biosynthesis. Transports lipid-linked peptidoglycan precursors from the inner to the outer leaflet of the cytoplasmic membrane. The polypeptide is Probable lipid II flippase MurJ (Rhizobium tropici).